A 153-amino-acid polypeptide reads, in one-letter code: Large ribosomal subunit protein uL30 (153 aa).

This sequence belongs to the universal ribosomal protein uL30 family. Part of the 50S ribosomal subunit.

The sequence is that of Large ribosomal subunit protein uL30 from Methanospirillum hungatei JF-1 (strain ATCC 27890 / DSM 864 / NBRC 100397 / JF-1).